Consider the following 1393-residue polypeptide: ABC transporter G family member 3 (1393 aa).

A compositionally biased stretch (basic and acidic residues) spans methionine 1–proline 14. The disordered stretch occupies residues methionine 1 to serine 68. Positions aspartate 15–asparagine 50 are enriched in low complexity. The region spanning valine 100–leucine 353 is the ABC transporter 1 domain. Glycine 144–serine 151 lines the ATP pocket. Residues methionine 473–asparagine 698 enclose the ABC transmembrane type-2 1 domain. A run of 7 helical transmembrane segments spans residues phenylalanine 479–threonine 499, leucine 509–phenylalanine 529, isoleucine 558–phenylalanine 578, phenylalanine 585–valine 605, leucine 615–isoleucine 635, isoleucine 640–valine 660, and valine 724–valine 744. Residues methionine 783–tyrosine 1035 enclose the ABC transporter 2 domain. ATP is bound at residue glycine 828–serine 835. The region spanning glutamine 1121–isoleucine 1388 is the ABC transmembrane type-2 2 domain. Helical transmembrane passes span threonine 1122 to leucine 1142, leucine 1157 to valine 1177, leucine 1206 to leucine 1226, phenylalanine 1235 to leucine 1255, isoleucine 1265 to isoleucine 1285, and phenylalanine 1364 to alanine 1384.

This sequence belongs to the ABC transporter superfamily. ABCG family. PDR (TC 3.A.1.205) subfamily.

The protein resides in the membrane. The polypeptide is ABC transporter G family member 3 (abcG3) (Dictyostelium discoideum (Social amoeba)).